The following is a 485-amino-acid chain: Protein disulfide isomerase-like 5-4 (485 aa).

In terms of domain architecture, Thioredoxin spans 114–263 (VPTGSEFHPG…LVAAMETYVA (150 aa)). The Nucleophile role is filled by Cys-170. Residues 444 to 464 (FSHFITNVCAIIGGVFTVAGI) form a helical membrane-spanning segment.

This sequence belongs to the protein disulfide isomerase family.

The protein localises to the membrane. In terms of biological role, acts as a protein-folding catalyst that interacts with nascent polypeptides to catalyze the formation, isomerization, and reduction or oxidation of disulfide bonds. May play a role in storage protein biogenesis. The polypeptide is Protein disulfide isomerase-like 5-4 (PDIL5-4) (Oryza sativa subsp. japonica (Rice)).